The sequence spans 473 residues: Ornithine aminotransferase, mitochondrial (473 aa).

Residues 1–32 (MAAALARRGGGGLARALARGRGMCSATAAERA) constitute a mitochondrion transit peptide. K293 is modified (N6-(pyridoxal phosphate)lysine).

It belongs to the class-III pyridoxal-phosphate-dependent aminotransferase family. As to quaternary structure, homotetramer. The cofactor is pyridoxal 5'-phosphate.

It is found in the mitochondrion matrix. It catalyses the reaction a 2-oxocarboxylate + L-ornithine = L-glutamate 5-semialdehyde + an L-alpha-amino acid. The protein operates within amino-acid biosynthesis; L-proline biosynthesis; L-glutamate 5-semialdehyde from L-ornithine: step 1/1. Its function is as follows. Confers drought and oxidative stress tolerance mainly through enhancing ROS-scavenging capacity and Pro pre-accumulation. The sequence is that of Ornithine aminotransferase, mitochondrial (OAT) from Oryza sativa subsp. japonica (Rice).